We begin with the raw amino-acid sequence, 360 residues long: GDP-mannose transporter (360 aa).

At 1–49 the chain is on the cytoplasmic side; the sequence is MSSSETKGRNEEDVAEIKKAIATGAVKDPSNLSAIPPIFVVSGANFSMN. Residues 50 to 67 form a helical membrane-spanning segment; that stretch reads FLLLCIQSSVCCACVFAV. Residues 68–84 lie on the Lumenal side of the membrane; sequence KKLGIISFRDFDMKDAK. The helical transmembrane segment at 85–105 threads the bilayer; the sequence is MWFPISFLLVSVIYTGSKSLQ. At 106–110 the chain is on the cytoplasmic side; it reads YLSIP. A helical transmembrane segment spans residues 111-131; the sequence is VYTIFKNLTIILIAYGEVLWF. Over 132-134 the chain is Lumenal; it reads GGR. Residues 135-155 form a helical membrane-spanning segment; the sequence is VTALTFVSFIFMVISSIIAAW. The Cytoplasmic portion of the chain corresponds to 156–164; that stretch reads SDVQSALAS. The chain crosses the membrane as a helical span at residues 165 to 185; the sequence is SIPGASSGVSVGAMQSLFGAL. Residue Arg-186 is a topological domain, lumenal. The chain crosses the membrane as a helical span at residues 187 to 207; the sequence is GLNVGYFWMLVNCLTSAAYVL. Residues 208 to 220 are Cytoplasmic-facing; that stretch reads SMRKRIKSTGFSD. Residues 221 to 241 form a helical membrane-spanning segment; the sequence is WDTMFYNNLLSIPVLAVFSLI. Residues 242–260 are Lumenal-facing; that stretch reads AEDWGRENLNRNFPAETRN. A helical transmembrane segment spans residues 261-281; sequence FLLFAIAFSGAAAVGISYTTA. The Cytoplasmic portion of the chain corresponds to 282 to 291; that stretch reads WCVRVTSSTT. Residues 292 to 312 form a helical membrane-spanning segment; that stretch reads YSMVGALNKLPVAASGMLFFG. Residues 313–314 lie on the Lumenal side of the membrane; it reads DP. The helical transmembrane segment at 315–335 threads the bilayer; the sequence is VTVGSVSAVGVGFFAGIVYAV. At 336 to 360 the chain is on the cytoplasmic side; the sequence is AKNNQKKNERRQAADAIIPMASRKP.

It belongs to the TPT transporter family. SLC35D subfamily. In terms of assembly, homooligomer.

The protein resides in the golgi apparatus membrane. Its subcellular location is the cytoplasmic vesicle membrane. The protein localises to the endoplasmic reticulum membrane. Its function is as follows. Involved in the import of GDP-mannose from the cytoplasm into the Golgi lumen. The polypeptide is GDP-mannose transporter (VRG4) (Coprinopsis cinerea (strain Okayama-7 / 130 / ATCC MYA-4618 / FGSC 9003) (Inky cap fungus)).